The chain runs to 174 residues: Bifunctional protein PyrR 2 (174 aa).

Substrate-binding positions include 39 to 40, 100 to 108, and Arg133; these read TR and DDVLFTGRT. Residues 96–108 carry the PRPP-binding motif; the sequence is VILVDDVLFTGRT.

The protein belongs to the purine/pyrimidine phosphoribosyltransferase family. PyrR subfamily. Homodimer and homohexamer; in equilibrium.

It catalyses the reaction UMP + diphosphate = 5-phospho-alpha-D-ribose 1-diphosphate + uracil. Regulates transcriptional attenuation of the pyrimidine nucleotide (pyr) operon by binding in a uridine-dependent manner to specific sites on pyr mRNA. This disrupts an antiterminator hairpin in the RNA and favors formation of a downstream transcription terminator, leading to a reduced expression of downstream genes. Its function is as follows. Also displays a weak uracil phosphoribosyltransferase activity which is not physiologically significant. The sequence is that of Bifunctional protein PyrR 2 (pyrR2) from Lactiplantibacillus plantarum (strain ATCC BAA-793 / NCIMB 8826 / WCFS1) (Lactobacillus plantarum).